Reading from the N-terminus, the 139-residue chain is Low molecular weight protein-tyrosine-phosphatase PtpB (139 aa).

The active-site Nucleophile is the cysteine 7. Arginine 13 is a catalytic residue. The Proton donor role is filled by aspartate 111.

This sequence belongs to the low molecular weight phosphotyrosine protein phosphatase family.

It catalyses the reaction O-phospho-L-tyrosyl-[protein] + H2O = L-tyrosyl-[protein] + phosphate. Its function is as follows. Dephosphorylates the phosphotyrosine-containing proteins. This Staphylococcus epidermidis (strain ATCC 35984 / DSM 28319 / BCRC 17069 / CCUG 31568 / BM 3577 / RP62A) protein is Low molecular weight protein-tyrosine-phosphatase PtpB (ptpB).